A 445-amino-acid polypeptide reads, in one-letter code: Histamine H3 receptor (445 aa).

The Extracellular portion of the chain corresponds to 1-39 (MERAPPDGLMNASGTLAGEAAAAGGARGFSAAWTAVLAA). N-linked (GlcNAc...) asparagine glycosylation occurs at Asn11. A helical transmembrane segment spans residues 40-60 (LMALLIVATVLGNALVMLAFV). Over 61-70 (ADSSLRTQNN) the chain is Cytoplasmic. The chain crosses the membrane as a helical span at residues 71-91 (FFLLNLAISDFLVGAFCIPLY). The Extracellular segment spans residues 92 to 108 (VPYVLTGRWTFGRGLCK). Cys107 and Cys188 are oxidised to a cystine. Residues 109–129 (LWLVVDYLLCASSVFNIVLIS) form a helical membrane-spanning segment. Over 130–156 (YDRFLSVTRAVSYRAQQGDTRRAVRKM) the chain is Cytoplasmic. The chain crosses the membrane as a helical span at residues 157-177 (ALVWVLAFLLYGPAILSWEYL). Over 178 to 196 (SGGSSIPEGHCYAEFFYNW) the chain is Extracellular. The chain crosses the membrane as a helical span at residues 197–217 (YFLITASTLEFFTPFLSVTFF). At 218 to 359 (NLSIYLNIQR…LSRDKKVAKS (142 aa)) the chain is on the cytoplasmic side. Disordered regions lie at residues 234–259 (DGGREAGPEPPPDAQPSPPPAPPSCW) and 286–336 (AGEA…LEKR). Residues 241-256 (PEPPPDAQPSPPPAPP) show a composition bias toward pro residues. Over residues 290–299 (ALGGGSGGGA) the composition is skewed to gly residues. A compositionally biased stretch (low complexity) spans 300–312 (AASPTSSSGSSSR). A helical transmembrane segment spans residues 360–380 (LAIIVSIFGLCWAPYTLLMII). Over 381 to 396 (RAACHGRCIPDYWYET) the chain is Extracellular. A helical membrane pass occupies residues 397 to 417 (SFWLLWANSAVNPVLYPLCHY). The Cytoplasmic portion of the chain corresponds to 418–445 (SFRRAFTKLLCPQKLKVQPHGSLEQCWK). Ser439 is subject to Phosphoserine.

The protein belongs to the G-protein coupled receptor 1 family. In terms of tissue distribution, expressed abundantly in brain, most notably throughout the thalamus, the ventromedial hypothalamus and the caudate nucleus. Isoform 1 is largely predominant in all tissues.

It is found in the cell membrane. The H3 subclass of histamine receptors could mediate the histamine signals in CNS and peripheral nervous system. Signals through the inhibition of adenylate cyclase and displays high constitutive activity (spontaneous activity in the absence of agonist). The protein is Histamine H3 receptor (Hrh3) of Rattus norvegicus (Rat).